The sequence spans 354 residues: Galactose-1-phosphate uridylyltransferase (354 aa).

Residues 36–72 (TVTTSEVRRDPLLGDSAPSRLAPQGRTYHPPADQCPL) are disordered. Zn(2+) contacts are provided by cysteine 70, cysteine 73, and histidine 114. Asparagine 154 is a UDP-alpha-D-glucose binding site. Histidine 165 serves as a coordination point for Zn(2+). Histidine 167 (tele-UMP-histidine intermediate) is an active-site residue. UDP-alpha-D-glucose contacts are provided by glutamine 169 and glutamine 332.

This sequence belongs to the galactose-1-phosphate uridylyltransferase type 1 family. Requires Zn(2+) as cofactor.

It catalyses the reaction alpha-D-galactose 1-phosphate + UDP-alpha-D-glucose = alpha-D-glucose 1-phosphate + UDP-alpha-D-galactose. The protein operates within carbohydrate metabolism; galactose metabolism. The chain is Galactose-1-phosphate uridylyltransferase (galT) from Streptomyces lividans.